Consider the following 320-residue polypeptide: Lipoyl synthase (320 aa).

C67, C72, C78, C93, C97, C100, and S307 together coordinate [4Fe-4S] cluster. Residues 79–296 (FNHGTATFMI…GVIAKEIGFT (218 aa)) enclose the Radical SAM core domain.

This sequence belongs to the radical SAM superfamily. Lipoyl synthase family. Requires [4Fe-4S] cluster as cofactor.

The protein resides in the cytoplasm. It catalyses the reaction [[Fe-S] cluster scaffold protein carrying a second [4Fe-4S](2+) cluster] + N(6)-octanoyl-L-lysyl-[protein] + 2 oxidized [2Fe-2S]-[ferredoxin] + 2 S-adenosyl-L-methionine + 4 H(+) = [[Fe-S] cluster scaffold protein] + N(6)-[(R)-dihydrolipoyl]-L-lysyl-[protein] + 4 Fe(3+) + 2 hydrogen sulfide + 2 5'-deoxyadenosine + 2 L-methionine + 2 reduced [2Fe-2S]-[ferredoxin]. It functions in the pathway protein modification; protein lipoylation via endogenous pathway; protein N(6)-(lipoyl)lysine from octanoyl-[acyl-carrier-protein]: step 2/2. In terms of biological role, catalyzes the radical-mediated insertion of two sulfur atoms into the C-6 and C-8 positions of the octanoyl moiety bound to the lipoyl domains of lipoate-dependent enzymes, thereby converting the octanoylated domains into lipoylated derivatives. This is Lipoyl synthase from Pseudoalteromonas atlantica (strain T6c / ATCC BAA-1087).